Reading from the N-terminus, the 240-residue chain is Dihydromonapterin reductase (240 aa).

The active-site Proton acceptor is Y152.

This sequence belongs to the short-chain dehydrogenases/reductases (SDR) family. FolM subfamily.

It catalyses the reaction (6S)-5,6,7,8-tetrahydrofolate + NADP(+) = 7,8-dihydrofolate + NADPH + H(+). It carries out the reaction 7,8-dihydromonapterin + NADPH + H(+) = 5,6,7,8-tetrahydromonapterin + NADP(+). In terms of biological role, catalyzes the reduction of dihydromonapterin to tetrahydromonapterin. Also has lower activity with dihydrofolate. This chain is Dihydromonapterin reductase (folM), found in Shigella flexneri serotype 5b (strain 8401).